Here is a 345-residue protein sequence, read N- to C-terminus: Aurora kinase B (345 aa).

The disordered stretch occupies residues 1–25 (MAQKENAYPWPYGSKTSQSGLNTLS). The span at 14–25 (SKTSQSGLNTLS) shows a compositional bias: polar residues. Thr-35 carries the phosphothreonine modification. Positions 50–77 (TAAPGQKLAENKSQGSTASQGSQNKQPF) are disordered. The segment covering 60-77 (NKSQGSTASQGSQNKQPF) has biased composition (polar residues). Ser-62 carries the phosphoserine modification. Residues 82–332 (FEIGRPLGKG…LAEVAAHPWV (251 aa)) form the Protein kinase domain. Residues 88-96 (LGKGKFGNV) and Lys-111 contribute to the ATP site. The Proton acceptor role is filled by Asp-205. Lys-220 is modified (N6-acetyllysine). Ser-232 is subject to Phosphoserine. Thr-237 carries the phosphothreonine; by autocatalysis modification.

It belongs to the protein kinase superfamily. Ser/Thr protein kinase family. Aurora subfamily. Component of the chromosomal passenger complex (CPC) composed of at least BIRC5/survivin, CDCA8/borealin, INCENP, AURKB or AURKC; predominantly independent AURKB- and AURKC-containing complexes exist. Associates with RACGAP1 during M phase. Interacts with SPDYC; this interaction may be required for proper localization of active, Thr-237-phosphorylated AURKB form during prometaphase and metaphase. Interacts with p53/TP53. Interacts (via the middle kinase domain) with NOC2L (via the N- and C-terminus domains). Interacts with CDCA1. Interacts with EVI5. Interacts with JTB. Interacts with NDC80. Interacts with PSMA3. Interacts with RNF2/RING1B. Interacts with SEPTIN1. Interacts with SIRT2. Interacts with TACC1. Interacts with TTC28. In terms of processing, the phosphorylation of Thr-237 requires the binding to INCENP and occurs by means of an autophosphorylation mechanism. Thr-237 phosphorylation is indispensable for the AURKB kinase activity. Acetylated at Lys-220 by KAT5 at kinetochores, increasing AURKB activity and promoting accurate chromosome segregation in mitosis. Post-translationally, ubiquitinated by different BCR (BTB-CUL3-RBX1) E3 ubiquitin ligase complexes. Ubiquitinated by the BCR(KLHL9-KLHL13) E3 ubiquitin ligase complex, ubiquitination leads to removal from mitotic chromosomes and is required for cytokinesis. During anaphase, the BCR(KLHL21) E3 ubiquitin ligase complex recruits the CPC complex from chromosomes to the spindle midzone and mediates the ubiquitination of AURKB. Ubiquitination of AURKB by BCR(KLHL21) E3 ubiquitin ligase complex may not lead to its degradation by the proteasome. Deubiquitinated by USP35; inhibiting CDH1-mediated degradation of AURKB. Expressed in testis, intestine and spleen. All of them are tissues that contain a large number of proliferating cells. Expressed during S phase, in a cell-cycle-dependent fashion.

The protein localises to the nucleus. It localises to the chromosome. Its subcellular location is the centromere. It is found in the kinetochore. The protein resides in the cytoplasm. The protein localises to the cytoskeleton. It localises to the spindle. Its subcellular location is the midbody. It carries out the reaction L-seryl-[protein] + ATP = O-phospho-L-seryl-[protein] + ADP + H(+). The catalysed reaction is L-threonyl-[protein] + ATP = O-phospho-L-threonyl-[protein] + ADP + H(+). Its activity is regulated as follows. Activity is greatly increased when AURKB is within the CPC complex. In particular, AURKB-phosphorylated INCENP acts as an activator of AURKB. Positive feedback between HASPIN and AURKB contributes to CPC localization. Serine/threonine-protein kinase component of the chromosomal passenger complex (CPC), a complex that acts as a key regulator of mitosis. The CPC complex has essential functions at the centromere in ensuring correct chromosome alignment and segregation and is required for chromatin-induced microtubule stabilization and spindle assembly. Involved in the bipolar attachment of spindle microtubules to kinetochores and is a key regulator for the onset of cytokinesis during mitosis. Required for central/midzone spindle assembly and cleavage furrow formation. Key component of the cytokinesis checkpoint, a process required to delay abscission to prevent both premature resolution of intercellular chromosome bridges and accumulation of DNA damage: phosphorylates CHMP4C, leading to retain abscission-competent VPS4 (VPS4A and/or VPS4B) at the midbody ring until abscission checkpoint signaling is terminated at late cytokinesis. AURKB phosphorylates the CPC complex subunits BIRC5/survivin, CDCA8/borealin and INCENP. Phosphorylation of INCENP leads to increased AURKB activity. Other known AURKB substrates involved in centromeric functions and mitosis are CENPA, DES/desmin, GPAF, KIF2C, NSUN2, RACGAP1, SEPTIN1, VIM/vimentin, HASPIN, and histone H3. A positive feedback loop involving HASPIN and AURKB contributes to localization of CPC to centromeres. Phosphorylation of VIM controls vimentin filament segregation in cytokinetic process, whereas histone H3 is phosphorylated at 'Ser-10' and 'Ser-28' during mitosis (H3S10ph and H3S28ph, respectively). AURKB is also required for kinetochore localization of BUB1 and SGO1. Phosphorylation of p53/TP53 negatively regulates its transcriptional activity. Key regulator of active promoters in resting B- and T-lymphocytes: acts by mediating phosphorylation of H3S28ph at active promoters in resting B-cells, inhibiting RNF2/RING1B-mediated ubiquitination of histone H2A and enhancing binding and activity of the USP16 deubiquitinase at transcribed genes. Acts as an inhibitor of CGAS during mitosis: catalyzes phosphorylation of the N-terminus of CGAS during the G2-M transition, blocking CGAS liquid phase separation and activation, and thereby preventing CGAS-induced autoimmunity. Phosphorylates KRT5 during anaphase and telophase. Phosphorylates ATXN10 which promotes phosphorylation of ATXN10 by PLK1 and may play a role in the regulation of cytokinesis and stimulating the proteasomal degradation of ATXN10. This chain is Aurora kinase B (Aurkb), found in Mus musculus (Mouse).